Here is a 409-residue protein sequence, read N- to C-terminus: Glucan endo-1,6-beta-glucosidase B (409 aa).

The signal sequence occupies residues 1 to 16 (MKFILPLFTSLPVALA). N35 is a glycosylation site (N-linked (GlcNAc...) asparagine). E228 functions as the Proton donor in the catalytic mechanism. The Nucleophile role is filled by E330.

It belongs to the glycosyl hydrolase 5 (cellulase A) family.

Its subcellular location is the secreted. It carries out the reaction Random hydrolysis of (1-&gt;6)-linkages in (1-&gt;6)-beta-D-glucans.. Beta-glucanases participate in the metabolism of beta-glucan, the main structural component of the cell wall. Acts on lutean, pustulan and 1,6-oligo-beta-D-glucosides. This is Glucan endo-1,6-beta-glucosidase B (exgB) from Emericella nidulans (strain FGSC A4 / ATCC 38163 / CBS 112.46 / NRRL 194 / M139) (Aspergillus nidulans).